Reading from the N-terminus, the 260-residue chain is Hydroxyacylglutathione hydrolase (260 aa).

Zn(2+) contacts are provided by H55, H57, D59, H60, H116, D133, and H171.

Belongs to the metallo-beta-lactamase superfamily. Glyoxalase II family. As to quaternary structure, monomer. It depends on Zn(2+) as a cofactor.

The catalysed reaction is an S-(2-hydroxyacyl)glutathione + H2O = a 2-hydroxy carboxylate + glutathione + H(+). It functions in the pathway secondary metabolite metabolism; methylglyoxal degradation; (R)-lactate from methylglyoxal: step 2/2. Thiolesterase that catalyzes the hydrolysis of S-D-lactoyl-glutathione to form glutathione and D-lactic acid. This is Hydroxyacylglutathione hydrolase from Shewanella loihica (strain ATCC BAA-1088 / PV-4).